An 869-amino-acid chain; its full sequence is Alanine--tRNA ligase (869 aa).

Positions 559, 563, 660, and 664 each coordinate Zn(2+).

Belongs to the class-II aminoacyl-tRNA synthetase family. The cofactor is Zn(2+).

The protein localises to the cytoplasm. It carries out the reaction tRNA(Ala) + L-alanine + ATP = L-alanyl-tRNA(Ala) + AMP + diphosphate. Catalyzes the attachment of alanine to tRNA(Ala) in a two-step reaction: alanine is first activated by ATP to form Ala-AMP and then transferred to the acceptor end of tRNA(Ala). Also edits incorrectly charged Ser-tRNA(Ala) and Gly-tRNA(Ala) via its editing domain. The protein is Alanine--tRNA ligase of Herminiimonas arsenicoxydans.